A 111-amino-acid chain; its full sequence is Ribonuclease P protein component (111 aa).

This sequence belongs to the RnpA family. In terms of assembly, consists of a catalytic RNA component (M1 or rnpB) and a protein subunit.

The enzyme catalyses Endonucleolytic cleavage of RNA, removing 5'-extranucleotides from tRNA precursor.. Its function is as follows. RNaseP catalyzes the removal of the 5'-leader sequence from pre-tRNA to produce the mature 5'-terminus. It can also cleave other RNA substrates such as 4.5S RNA. The protein component plays an auxiliary but essential role in vivo by binding to the 5'-leader sequence and broadening the substrate specificity of the ribozyme. This is Ribonuclease P protein component from Streptococcus thermophilus (strain ATCC BAA-491 / LMD-9).